The following is a 900-amino-acid chain: DNA mismatch repair protein MutS (900 aa).

637-644 serves as a coordination point for ATP; sequence GPNMAGKS.

This sequence belongs to the DNA mismatch repair MutS family.

Its function is as follows. This protein is involved in the repair of mismatches in DNA. It is possible that it carries out the mismatch recognition step. This protein has a weak ATPase activity. This chain is DNA mismatch repair protein MutS, found in Methanosarcina barkeri (strain Fusaro / DSM 804).